The chain runs to 423 residues: Histidine--tRNA ligase (423 aa).

The protein belongs to the class-II aminoacyl-tRNA synthetase family. As to quaternary structure, homodimer.

It localises to the cytoplasm. The enzyme catalyses tRNA(His) + L-histidine + ATP = L-histidyl-tRNA(His) + AMP + diphosphate + H(+). The protein is Histidine--tRNA ligase of Rhodococcus opacus (strain B4).